We begin with the raw amino-acid sequence, 491 residues long: F-box/LRR-repeat protein 7 (491 aa).

A disordered region spans residues M1 to S79. Residues G10–S26 are compositionally biased toward low complexity. The span at T27 to S55 shows a compositional bias: polar residues. One can recognise an F-box domain in the interval Q111 to I157. LRR repeat units lie at residues L170–G195, C196–G221, C222–G247, C253–D281, C282–R307, C308–D333, C334–H359, C360–G385, C386–K411, C412–S437, and C438–D463.

Belongs to the FBXL7 family. Part of the SCF (SKP1-CUL1-F-box) E3 ubiquitin-protein ligase complex SCF(FBXL7) composed of CUL1, SKP1, RBX1 and FBXL7. Interacts with AURKA; interaction takes place during mitosis but not in interphase. Interacts with BIRC5; this interaction allows BIRC5 to be polyubiquitinated by the SCF(FBXL7) E3 ubiquitin-protein ligase complex.

The protein resides in the cytoplasm. It localises to the cytoskeleton. The protein localises to the microtubule organizing center. Its subcellular location is the centrosome. It participates in protein modification; protein ubiquitination. Substrate recognition component of a SCF (SKP1-CUL1-F-box protein) E3 ubiquitin-protein ligase complex. During mitosis, it mediates the ubiquitination and subsequent proteasomal degradation of AURKA, causing mitotic arrest. It also regulates mitochondrial function by mediating the ubiquitination and proteasomal degradation of the apoptosis inhibitor BIRC5. The chain is F-box/LRR-repeat protein 7 (FBXL7) from Homo sapiens (Human).